The chain runs to 365 residues: NAC domain-containing protein 43 (365 aa).

Residues 16–180 (VPPGFRFHPT…GWVVCRIFKK (165 aa)) form the NAC domain. The DNA-binding element occupies 116–186 (IGMRKTLVFY…IFKKKNLHKT (71 aa)).

Expressed in various aboveground tissues undergoing thickening of the lignified secondary wall such as anthers, filaments of stamens, the base of carpels, styles, the boundaries between siliques and pedicels, the midrib of leaf veins, and inflorescence stems, specifically in interfascicular fibers (sclerenchyma), cells differentiating into vascular vessels, and xylary fibers (secondary xylem).

It is found in the nucleus. In terms of biological role, transcription activator of genes involved in biosynthesis of secondary walls. Together with NST2 and NST3, required for the secondary cell wall thickening of sclerenchymatous fibers, secondary xylem (tracheary elements), and of the anther endocethium, which is necessary for anther dehiscence. May also regulate the secondary cell wall lignification of other tissues. In Arabidopsis thaliana (Mouse-ear cress), this protein is NAC domain-containing protein 43 (NAC043).